A 142-amino-acid chain; its full sequence is NTF2-related export protein 2 (142 aa).

One can recognise an NTF2 domain in the interval 17–136 (AAEEFVNIYY…WKIASDCFRF (120 aa)).

As to quaternary structure, associates with NXF1, NXF2, NXF3 and NXF5.

It is found in the nucleus. It localises to the cytoplasm. Regulator of protein export for NES-containing proteins. Also plays a role in mRNA nuclear export. This is NTF2-related export protein 2 (Nxt2) from Mus musculus (Mouse).